The chain runs to 402 residues: Dihydrolipoyllysine-residue acetyltransferase component of pyruvate dehydrogenase complex (402 aa).

The region spanning Met-1–Lys-69 is the Lipoyl-binding domain. Lys-35 carries the post-translational modification N6-lipoyllysine. The 38-residue stretch at His-109–Ile-146 folds into the Peripheral subunit-binding (PSBD) domain. His-375 is an active-site residue.

It belongs to the 2-oxoacid dehydrogenase family. As to quaternary structure, forms a 24-polypeptide structural core with octahedral symmetry. (R)-lipoate is required as a cofactor.

The catalysed reaction is N(6)-[(R)-dihydrolipoyl]-L-lysyl-[protein] + acetyl-CoA = N(6)-[(R)-S(8)-acetyldihydrolipoyl]-L-lysyl-[protein] + CoA. Functionally, the pyruvate dehydrogenase complex catalyzes the overall conversion of pyruvate to acetyl-CoA and CO(2). It contains multiple copies of three enzymatic components: pyruvate dehydrogenase (E1), dihydrolipoamide acetyltransferase (E2) and lipoamide dehydrogenase (E3). This chain is Dihydrolipoyllysine-residue acetyltransferase component of pyruvate dehydrogenase complex (aceF), found in Buchnera aphidicola subsp. Schizaphis graminum (strain Sg).